The following is a 258-amino-acid chain: Acyl-[acyl-carrier-protein]--UDP-N-acetylglucosamine O-acyltransferase (258 aa).

This sequence belongs to the transferase hexapeptide repeat family. LpxA subfamily. In terms of assembly, homotrimer.

The protein resides in the cytoplasm. The enzyme catalyses a (3R)-hydroxyacyl-[ACP] + UDP-N-acetyl-alpha-D-glucosamine = a UDP-3-O-[(3R)-3-hydroxyacyl]-N-acetyl-alpha-D-glucosamine + holo-[ACP]. It functions in the pathway glycolipid biosynthesis; lipid IV(A) biosynthesis; lipid IV(A) from (3R)-3-hydroxytetradecanoyl-[acyl-carrier-protein] and UDP-N-acetyl-alpha-D-glucosamine: step 1/6. Involved in the biosynthesis of lipid A, a phosphorylated glycolipid that anchors the lipopolysaccharide to the outer membrane of the cell. The protein is Acyl-[acyl-carrier-protein]--UDP-N-acetylglucosamine O-acyltransferase of Neisseria meningitidis serogroup A / serotype 4A (strain DSM 15465 / Z2491).